The primary structure comprises 233 residues: Cell number regulator 8 (233 aa).

The next 2 helical transmembrane spans lie at 85 to 101 (VCLLGTVAPCVLYGSNV) and 115 to 138 (CLPYTGLYLLGNSLFGWNCLAPWF).

The protein belongs to the cornifelin family. As to expression, expressed in roots, coleoptiles, leaves, stalks, apical meristems, immature ears, embryos, endosperm, pericarp, silks, tassel spikelets and pollen. Highest expression in the pericarp and stalks.

Its subcellular location is the membrane. The sequence is that of Cell number regulator 8 (CNR8) from Zea mays (Maize).